The sequence spans 270 residues: 4-hydroxy-tetrahydrodipicolinate reductase (270 aa).

Residues 11–16 (GAGGRM) and Glu37 each bind NAD(+). Arg38 provides a ligand contact to NADP(+). Residues 101 to 103 (GTT) and 125 to 128 (APNM) each bind NAD(+). The Proton donor/acceptor role is filled by His158. His159 contacts (S)-2,3,4,5-tetrahydrodipicolinate. Lys162 serves as the catalytic Proton donor. Residue 168 to 169 (GT) participates in (S)-2,3,4,5-tetrahydrodipicolinate binding.

This sequence belongs to the DapB family.

It localises to the cytoplasm. The catalysed reaction is (S)-2,3,4,5-tetrahydrodipicolinate + NAD(+) + H2O = (2S,4S)-4-hydroxy-2,3,4,5-tetrahydrodipicolinate + NADH + H(+). It catalyses the reaction (S)-2,3,4,5-tetrahydrodipicolinate + NADP(+) + H2O = (2S,4S)-4-hydroxy-2,3,4,5-tetrahydrodipicolinate + NADPH + H(+). It functions in the pathway amino-acid biosynthesis; L-lysine biosynthesis via DAP pathway; (S)-tetrahydrodipicolinate from L-aspartate: step 4/4. Its function is as follows. Catalyzes the conversion of 4-hydroxy-tetrahydrodipicolinate (HTPA) to tetrahydrodipicolinate. This Shewanella sp. (strain ANA-3) protein is 4-hydroxy-tetrahydrodipicolinate reductase.